Here is a 213-residue protein sequence, read N- to C-terminus: NADH-quinone oxidoreductase subunit C (213 aa).

The protein belongs to the complex I 30 kDa subunit family. NDH-1 is composed of 15 different subunits. Subunits NuoB, C, D, E, F, and G constitute the peripheral sector of the complex.

It localises to the cell membrane. The enzyme catalyses a quinone + NADH + 5 H(+)(in) = a quinol + NAD(+) + 4 H(+)(out). Functionally, NDH-1 shuttles electrons from NADH, via FMN and iron-sulfur (Fe-S) centers, to quinones in the respiratory chain. The immediate electron acceptor for the enzyme in this species is believed to be a menaquinone. Couples the redox reaction to proton translocation (for every two electrons transferred, four hydrogen ions are translocated across the cytoplasmic membrane), and thus conserves the redox energy in a proton gradient. This Deinococcus geothermalis (strain DSM 11300 / CIP 105573 / AG-3a) protein is NADH-quinone oxidoreductase subunit C.